Reading from the N-terminus, the 508-residue chain is Mevalonate kinase ERG12 (508 aa).

A disordered region spans residues 1 to 46 (MPPSNPAMVNGLNGSHANGNGNGHNHISDSGSETSGESSNGSGRRR). Residues 10 to 42 (NGLNGSHANGNGNGHNHISDSGSETSGESSNGS) show a composition bias toward low complexity. ATP-binding positions include lysine 68, serine 200, and 205–211 (GAGLGSS). Mg(2+) is bound by residues serine 211 and glutamate 256. Aspartate 267 functions as the Proton acceptor in the catalytic mechanism.

The protein belongs to the GHMP kinase family. Mevalonate kinase subfamily. In terms of assembly, homodimer. It depends on Mg(2+) as a cofactor.

It is found in the cytoplasm. The protein resides in the cytosol. The catalysed reaction is (R)-mevalonate + ATP = (R)-5-phosphomevalonate + ADP + H(+). The protein operates within isoprenoid biosynthesis; isopentenyl diphosphate biosynthesis via mevalonate pathway; isopentenyl diphosphate from (R)-mevalonate: step 1/3. Mevalonate kinase; part of the second module of ergosterol biosynthesis pathway that includes the middle steps of the pathway. ERG12 converts mevalonate into 5-phosphomevalonate. The second module is carried out in the vacuole and involves the formation of farnesyl diphosphate, which is also an important intermediate in the biosynthesis of ubiquinone, dolichol, heme and prenylated proteins. Activity by the mevalonate kinase ERG12 (FG05912) first converts mevalonate into 5-phosphomevalonate. 5-phosphomevalonate is then further converted to 5-diphosphomevalonate by the phosphomevalonate kinase ERG8 (FG09764). The diphosphomevalonate decarboxylase ERG19 (FG10424) then produces isopentenyl diphosphate. The isopentenyl-diphosphate delta-isomerase IDI1 (FG09722) then catalyzes the 1,3-allylic rearrangement of the homoallylic substrate isopentenyl (IPP) to its highly electrophilic allylic isomer, dimethylallyl diphosphate (DMAPP). Finally the farnesyl diphosphate synthase ERG20 (FG06784) catalyzes the sequential condensation of isopentenyl pyrophosphate with dimethylallyl pyrophosphate, and then with the resultant geranylpyrophosphate to the ultimate product farnesyl pyrophosphate. The polypeptide is Mevalonate kinase ERG12 (Gibberella zeae (strain ATCC MYA-4620 / CBS 123657 / FGSC 9075 / NRRL 31084 / PH-1) (Wheat head blight fungus)).